The primary structure comprises 64 residues: Disintegrin VA6 (64 aa).

The 64-residue stretch at 1–64 (NSANPCCDPV…SDCPRNPYKS (64 aa)) folds into the Disintegrin domain. Cystine bridges form between C6/C29, C20/C26, C25/C50, and C38/C57. Positions 42 to 44 (RGD) match the Cell attachment site motif.

The protein belongs to the venom metalloproteinase (M12B) family. P-II subfamily. P-IId sub-subfamily. In terms of assembly, homodimer; disulfide-linked. Expressed by the venom gland.

It is found in the secreted. Its function is as follows. Poor inhibitor of platelet aggregation. The disintegrin inhibits the adhesion of cells expressing the RGD-dependent integrin alpha-5/beta-1 (ITGA5/ITGB1) to immobilized fibronectin. Inhibition on alpha-IIb/beta-3 (ITGA2B/ITGB3) is low, and there is no inhibition on alpha-1/beta-1 (ITGA1/ITGB1), alpha-2/beta-1 (ITGA2/ITGB1) and alpha-6/beta-1 (ITGA6/ITGB1). The chain is Disintegrin VA6 from Vipera ammodytes ammodytes (Western sand viper).